Here is a 252-residue protein sequence, read N- to C-terminus: Probable transcriptional regulatory protein all4276 (252 aa).

It belongs to the TACO1 family.

It localises to the cytoplasm. The protein is Probable transcriptional regulatory protein all4276 of Nostoc sp. (strain PCC 7120 / SAG 25.82 / UTEX 2576).